The chain runs to 488 residues: Beta-xylosidase (488 aa).

Catalysis depends on E163, which acts as the Proton donor. Catalysis depends on E275, which acts as the Nucleophile.

This sequence belongs to the glycosyl hydrolase 39 family.

It carries out the reaction Hydrolysis of (1-&gt;4)-beta-D-xylans, to remove successive D-xylose residues from the non-reducing termini.. Beta-xylosidase is an intracellular xylan-degrading enzyme. This chain is Beta-xylosidase (xynB), found in Caldicellulosiruptor saccharolyticus (Caldocellum saccharolyticum).